Reading from the N-terminus, the 1066-residue chain is Coiled-coil domain-containing protein 73 (1066 aa).

2 coiled-coil regions span residues 47 to 134 (KAET…QVSQ) and 178 to 391 (LVRE…KTEE). Disordered regions lie at residues 568–600 (LDTRSNKASSNGMSNEMAHKRNYNTDGSESNPF), 719–811 (SENS…PKSG), 854–883 (LSPATPSADSVSTSARSAFDLPSPDKPEKT), 944–978 (KNIESDPTSNSRAADTMSNWSIHLDPKGQPREERN), and 1003–1027 (VQQSHSQTVKVTDSPDPLTFSPGNN). Polar residues-rich tracts occupy residues 591–600 (NTDGSESNPF), 742–781 (RTNTNDIQNSSLRNHLGASESSVSVSDFQVNQGDSHTSQA), 789–811 (PLTTSSEKQPPSESQITETPKSG), 857–869 (ATPSADSVSTSAR), and 948–964 (SDPTSNSRAADTMSNWS). Positions 967–978 (LDPKGQPREERN) are enriched in basic and acidic residues. A compositionally biased stretch (polar residues) spans 1003–1013 (VQQSHSQTVKV).

The protein is Coiled-coil domain-containing protein 73 (Ccdc73) of Mus musculus (Mouse).